Consider the following 160-residue polypeptide: Cytochrome b6-f complex subunit 4 (160 aa).

Transmembrane regions (helical) follow at residues 36–56, 95–115, and 131–151; these read LLYI…GLAV, LLGV…PFLE, and TVFL…TLPI.

Belongs to the cytochrome b family. PetD subfamily. In terms of assembly, the 4 large subunits of the cytochrome b6-f complex are cytochrome b6, subunit IV (17 kDa polypeptide, petD), cytochrome f and the Rieske protein, while the 4 small subunits are petG, petL, petM and petN. The complex functions as a dimer.

The protein resides in the plastid. It localises to the chloroplast thylakoid membrane. In terms of biological role, component of the cytochrome b6-f complex, which mediates electron transfer between photosystem II (PSII) and photosystem I (PSI), cyclic electron flow around PSI, and state transitions. This is Cytochrome b6-f complex subunit 4 from Morus indica (Mulberry).